A 161-amino-acid polypeptide reads, in one-letter code: DNA-binding protein inhibitor ID-4 (161 aa).

The bHLH domain maps to 52-104; sequence AAEAAADEPALCLQCDMNDCYSRLRRLVPTIPPNKKVSKVEILPHVIDYILDL. The interval 116–161 is disordered; sequence RQPPPPAPPHHPAGTCPAAPPRTPLTALNTDPAGAVNKQGDSILCR. Pro residues predominate over residues 117 to 126; it reads QPPPPAPPHH.

Heterodimer with other HLH proteins.

The protein localises to the nucleus. Its function is as follows. Transcriptional regulator (lacking a basic DNA binding domain) which negatively regulates the basic helix-loop-helix (bHLH) transcription factors by forming heterodimers and inhibiting their DNA binding and transcriptional activity. Implicated in regulating a variety of cellular processes, including cellular growth, senescence, differentiation, apoptosis, angiogenesis, and neoplastic transformation. This Sus scrofa (Pig) protein is DNA-binding protein inhibitor ID-4 (ID4).